Consider the following 968-residue polypeptide: RNA polymerase-associated protein RapA (968 aa).

The Helicase ATP-binding domain occupies 164-334 (DVGRRHAPRV…FARLRLLDPN (171 aa)). 177 to 184 (DEVGLGKT) contributes to the ATP binding site. Residues 280 to 283 (DEAH) carry the DEAH box motif. A Helicase C-terminal domain is found at 490-644 (RVEWLMGYLT…TCPTGRTVYD (155 aa)).

This sequence belongs to the SNF2/RAD54 helicase family. RapA subfamily. Interacts with the RNAP. Has a higher affinity for the core RNAP than for the holoenzyme. Its ATPase activity is stimulated by binding to RNAP.

In terms of biological role, transcription regulator that activates transcription by stimulating RNA polymerase (RNAP) recycling in case of stress conditions such as supercoiled DNA or high salt concentrations. Probably acts by releasing the RNAP, when it is trapped or immobilized on tightly supercoiled DNA. Does not activate transcription on linear DNA. Probably not involved in DNA repair. This is RNA polymerase-associated protein RapA from Klebsiella pneumoniae subsp. pneumoniae (strain ATCC 700721 / MGH 78578).